The chain runs to 1512 residues: Bifunctional glutamate/proline--tRNA ligase (1512 aa).

The glutamate--tRNA ligase stretch occupies residues 164-759; that stretch reads GTKWDVSGNR…SSVLYSRVAV (596 aa). The 'HIGH' region signature appears at 204 to 214; sequence PEASGYLHIGH. The tract at residues 294 to 315 is disordered; it reads TPAEQMKAEREQRTESKHRKNS. The segment covering 299–308 has biased composition (basic and acidic residues); it reads MKAEREQRTE. Lysine 300 is subject to N6-acetyllysine; alternate. The residue at position 300 (lysine 300) is an N6-malonyllysine; alternate. The residue at position 355 (threonine 355) is a Phosphothreonine. Lysine 417 is modified (N6-acetyllysine). A 'KMSKS' region motif is present at residues 432 to 436; the sequence is VLSKR. The residue at position 434 (serine 434) is a Phosphoserine. 4 positions are modified to N6-acetyllysine: lysine 498, lysine 535, lysine 542, and lysine 637. Residues 709–736 show a composition bias toward basic and acidic residues; that stretch reads EMPTSGSKEKTKVEISKKETSSAPKERP. Positions 709–742 are disordered; that stretch reads EMPTSGSKEKTKVEISKKETSSAPKERPAPAVSS. A WHEP-TRS 1 domain is found at 749-805; sequence DSSVLYSRVAVQGDVVRELKAKKAPKEDIDAAVKQLLTLKAEYKEKTGQEYKPGNPS. Positions 760-956 are 3 X 57 AA approximate repeats; it reads QGDVVRELKA…GIEYKPVSAT (197 aa). Lysine 788 bears the N6-acetyllysine mark. The tract at residues 795 to 819 is disordered; it reads TGQEYKPGNPSAAAVQTVSTKSSSN. A compositionally biased stretch (polar residues) spans 808-819; the sequence is AVQTVSTKSSSN. Residues 822-878 enclose the WHEP-TRS 2 domain; that stretch reads ESTSLYNKVAAQGEVVRKLKAEKAPKAKVTEAVECLLSLKAEYKEKTGKDYVPGQPP. An N6-acetyllysine modification is found at lysine 861. Disordered stretches follow at residues 869–898 and 956–1011; these read GKDYVPGQPPASQNSHSNPVSNAQPAGAEK and TGAE…PKKQ. Tyrosine 872 bears the Phosphotyrosine mark. Over residues 878–892 the composition is skewed to polar residues; sequence PASQNSHSNPVSNAQ. Serine 885 bears the Phosphoserine mark. Residues 900 to 956 enclose the WHEP-TRS 3 domain; that stretch reads EAKVLFDRVACQGEVVRKLKAEKASKDQVDSAVQELLQLKAQYKSLTGIEYKPVSAT. Over residues 958–976 the composition is skewed to basic and acidic residues; it reads AEDKDKKKKEKENKSEKQN. The span at 997–1006 shows a compositional bias: gly residues; sequence LSSGGAGEGQ. Serine 998 is modified (phosphoserine). Residue serine 999 is modified to Phosphoserine; by RPS6KB1. The proline--tRNA ligase stretch occupies residues 1007 to 1512; the sequence is GPKKQTRLGL…KFYTLFGRSY (506 aa). Residues 1121–1123 and arginine 1152 contribute to the L-proline site; that span reads TSE. Residues arginine 1152, glutamate 1154, arginine 1163, threonine 1164, glutamine 1237, and threonine 1240 each coordinate ATP. Arginine 1152 is subject to Omega-N-methylarginine. Glutamine 1237 serves as a coordination point for Mg(2+). Residue histidine 1242 participates in L-proline binding. Residues threonine 1276 and arginine 1278 each coordinate ATP. Serine 1350 is modified (phosphoserine). Residues cysteine 1448, cysteine 1453, cysteine 1495, and cysteine 1497 each coordinate Zn(2+). Lysine 1503 carries the post-translational modification N6-acetyllysine.

It in the N-terminal section; belongs to the class-I aminoacyl-tRNA synthetase family. Glutamate--tRNA ligase type 2 subfamily. This sequence in the C-terminal section; belongs to the class-II aminoacyl-tRNA synthetase family. Homodimer. Part of the aminoacyl-tRNA synthetase multienzyme complex, also know as multisynthetase complex, that is composed of the tRNA ligases for Arg (RARS1), Asp (DARS1), Gln (QARS1), Ile (IARS1), Leu (LARS1), Lys (KARS1), Met (MARS1) the bifunctional ligase for Glu and Pro (EPRS1) and the auxiliary subunits AIMP1/p43, AIMP2/p38 and EEF1E1/p18. Forms a linear complex that contains MARS1, EEF1E1, EPRS1 and AIMP2 that is at the core of the multisubunit complex. Interacts with TARS3. Interacts with DUS2L. Component of the GAIT complex which is composed of EPRS1, RPL13A and GAPDH. Interacts (phosphorylated at Ser-999) with SLC27A1; mediates the translocation of SLC27A1 from the cytoplasm to the plasma membrane thereby increasing the uptake of long-chain fatty acids. In terms of processing, phosphorylated at Ser-999 by RPS6KB1; triggers EPRS1 release from the aminoacyl-tRNA synthetase multienzyme complex. In monocytes, the IFN-gamma-induced phosphorylation at Ser-999 releases EPRS1 from the aminoacyl-tRNA synthetase multienzyme complex, allowing its association with the GAIT complex. Phosphorylation at Ser-999 is specifically required for the RPL13A-mediated interaction of the GAIT complex with eIF4G. Phosphorylation at Ser-999 by RPS6KB1, is also induced by insulin through activation of the mTORC1 signaling pathway and promotes the interaction of EPRS1 with SLC27A1.

The protein resides in the cytoplasm. The protein localises to the cytosol. It localises to the membrane. It carries out the reaction tRNA(Glu) + L-glutamate + ATP = L-glutamyl-tRNA(Glu) + AMP + diphosphate. It catalyses the reaction tRNA(Pro) + L-proline + ATP = L-prolyl-tRNA(Pro) + AMP + diphosphate. Its function is as follows. Multifunctional protein which primarily functions within the aminoacyl-tRNA synthetase multienzyme complex, also known as multisynthetase complex. Within the complex it catalyzes the attachment of both L-glutamate and L-proline to their cognate tRNAs in a two-step reaction where the amino acid is first activated by ATP to form a covalent intermediate with AMP. Subsequently, the activated amino acid is transferred to the acceptor end of the cognate tRNA to form L-glutamyl-tRNA(Glu) and L-prolyl-tRNA(Pro). Upon interferon-gamma stimulation, EPRS1 undergoes phosphorylation, causing its dissociation from the aminoacyl-tRNA synthetase multienzyme complex. It is recruited to form the GAIT complex, which binds to stem loop-containing GAIT elements found in the 3'-UTR of various inflammatory mRNAs, such as ceruloplasmin. The GAIT complex inhibits the translation of these mRNAs, allowing interferon-gamma to redirect the function of EPRS1 from protein synthesis to translation inhibition in specific cell contexts. Furthermore, it can function as a downstream effector in the mTORC1 signaling pathway, by promoting the translocation of SLC27A1 from the cytoplasm to the plasma membrane where it mediates the uptake of long-chain fatty acid by adipocytes. Thereby, EPRS1 also plays a role in fat metabolism and more indirectly influences lifespan. The polypeptide is Bifunctional glutamate/proline--tRNA ligase (Mus musculus (Mouse)).